A 604-amino-acid polypeptide reads, in one-letter code: Elongation factor 4 (604 aa).

The tr-type G domain maps to 7–189 (SRIRNFSIIA…SIVHLVPPPD (183 aa)). GTP-binding positions include 19-24 (DHGKST) and 136-139 (NKID).

The protein belongs to the TRAFAC class translation factor GTPase superfamily. Classic translation factor GTPase family. LepA subfamily.

Its subcellular location is the cell inner membrane. It carries out the reaction GTP + H2O = GDP + phosphate + H(+). Functionally, required for accurate and efficient protein synthesis under certain stress conditions. May act as a fidelity factor of the translation reaction, by catalyzing a one-codon backward translocation of tRNAs on improperly translocated ribosomes. Back-translocation proceeds from a post-translocation (POST) complex to a pre-translocation (PRE) complex, thus giving elongation factor G a second chance to translocate the tRNAs correctly. Binds to ribosomes in a GTP-dependent manner. This is Elongation factor 4 from Gloeothece citriformis (strain PCC 7424) (Cyanothece sp. (strain PCC 7424)).